The primary structure comprises 177 residues: MAELTTIARPYAKAAFDVAVEHNAVDTWAEMLTFAALVSENETMQPLLTGSLASTKLAALFISVCGEQINEQGQNLIKVMAENGRLKVLPAVSELFAQYRNEWAKEVEADVVSAAELSSEQKQQISISLEKRLARKVKLNCSTDAALIAGVIIKAGDLVIDGSVRGKLSRLSEKLQS.

This sequence belongs to the ATPase delta chain family. As to quaternary structure, F-type ATPases have 2 components, F(1) - the catalytic core - and F(0) - the membrane proton channel. F(1) has five subunits: alpha(3), beta(3), gamma(1), delta(1), epsilon(1). F(0) has three main subunits: a(1), b(2) and c(10-14). The alpha and beta chains form an alternating ring which encloses part of the gamma chain. F(1) is attached to F(0) by a central stalk formed by the gamma and epsilon chains, while a peripheral stalk is formed by the delta and b chains.

The protein localises to the cell inner membrane. F(1)F(0) ATP synthase produces ATP from ADP in the presence of a proton or sodium gradient. F-type ATPases consist of two structural domains, F(1) containing the extramembraneous catalytic core and F(0) containing the membrane proton channel, linked together by a central stalk and a peripheral stalk. During catalysis, ATP synthesis in the catalytic domain of F(1) is coupled via a rotary mechanism of the central stalk subunits to proton translocation. Its function is as follows. This protein is part of the stalk that links CF(0) to CF(1). It either transmits conformational changes from CF(0) to CF(1) or is implicated in proton conduction. The sequence is that of ATP synthase subunit delta from Shewanella sp. (strain MR-4).